Reading from the N-terminus, the 104-residue chain is Urease subunit beta (104 aa).

It belongs to the urease beta subunit family. In terms of assembly, heterotrimer of UreA (gamma), UreB (beta) and UreC (alpha) subunits. Three heterotrimers associate to form the active enzyme.

It is found in the cytoplasm. It catalyses the reaction urea + 2 H2O + H(+) = hydrogencarbonate + 2 NH4(+). The protein operates within nitrogen metabolism; urea degradation; CO(2) and NH(3) from urea (urease route): step 1/1. In Synechococcus sp. (strain RCC307), this protein is Urease subunit beta.